The chain runs to 519 residues: Glucose-1-phosphate adenylyltransferase large subunit 2, chloroplastic/amyloplastic (519 aa).

The protein belongs to the bacterial/plant glucose-1-phosphate adenylyltransferase family. Heterotetramer. In terms of tissue distribution, leaves and tubers.

The protein resides in the plastid. It is found in the chloroplast. Its subcellular location is the amyloplast. The catalysed reaction is alpha-D-glucose 1-phosphate + ATP + H(+) = ADP-alpha-D-glucose + diphosphate. The protein operates within glycan biosynthesis; starch biosynthesis. With respect to regulation, activated by 3'phosphoglycerate, inhibited by orthophosphate. Allosteric regulation. Functionally, this protein plays a role in synthesis of starch. It catalyzes the synthesis of the activated glycosyl donor, ADP-glucose from Glc-1-P and ATP. The chain is Glucose-1-phosphate adenylyltransferase large subunit 2, chloroplastic/amyloplastic (AGPS2) from Solanum tuberosum (Potato).